The following is a 313-amino-acid chain: Protein FixB (313 aa).

255–283 contacts FAD; it reads LYLAVGISGQIQHMVGANASQTIFAINKD.

The protein belongs to the ETF alpha-subunit/FixB family. Heterodimer of FixA and FixB.

It participates in amine and polyamine metabolism; carnitine metabolism. In terms of biological role, required for anaerobic carnitine reduction. May bring reductant to CaiA. The sequence is that of Protein FixB from Shigella flexneri.